The following is a 113-amino-acid chain: Flagellar hook-basal body complex protein FliE (113 aa).

This sequence belongs to the FliE family.

It localises to the bacterial flagellum basal body. This Rhizobium etli (strain ATCC 51251 / DSM 11541 / JCM 21823 / NBRC 15573 / CFN 42) protein is Flagellar hook-basal body complex protein FliE.